The following is a 483-amino-acid chain: Pre-glycoprotein polyprotein GP complex (483 aa).

Glycine 2 carries N-myristoyl glycine; by host lipidation. Residues glycine 2–glutamate 17 lie on the Extracellular side of the membrane. The chain crosses the membrane as a helical span at residues alanine 18 to valine 32. Residue lysine 33 is a topological domain, cytoplasmic. A helical transmembrane segment spans residues glycine 34–alanine 53. Extracellular loops occupy residues glycine 54–serine 58 and glutamate 59–aspartate 422. Cysteine 57 is a binding site for Zn(2+). Asparagine 83 and asparagine 95 each carry an N-linked (GlcNAc...) asparagine; by host glycan. 6 disulfides stabilise this stretch: cysteine 92-cysteine 224, cysteine 134-cysteine 162, cysteine 205-cysteine 211, cysteine 269-cysteine 282, cysteine 291-cysteine 300, and cysteine 354-cysteine 375. Asparagine 164 and asparagine 176 each carry an N-linked (GlcNAc...) asparagine; by host glycan. N-linked (GlcNAc...) asparagine; by host glycans are attached at residues asparagine 355, asparagine 363, asparagine 380, and asparagine 385. The chain crosses the membrane as a helical span at residues isoleucine 423–proline 443. Over threonine 444–histidine 483 the chain is Cytoplasmic. Positions 445, 447, 453, 457, 465, 467, and 483 each coordinate Zn(2+).

It belongs to the arenaviridae GPC protein family. In terms of assembly, homotetramer; disulfide-linked. Homotetramer. GP2 homotetramers bind through ionic interactions with GP1 homotetramers to form the GP complex together with the stable signal peptide. The GP-C polyprotein interacts with the host protease MBTPS1/SKI-1 resulting in the polyprotein processing. In terms of processing, specific enzymatic cleavages in vivo yield mature proteins. GP-C polyprotein is cleaved in the endoplasmic reticulum by the host protease MBTPS1. Only cleaved glycoprotein is incorporated into virions. Post-translationally, the SSP remains stably associated with the GP complex following cleavage by signal peptidase and plays crucial roles in the trafficking of GP through the secretory pathway. Myristoylation is necessary for GP2-mediated fusion activity.

The protein localises to the virion membrane. Its subcellular location is the host endoplasmic reticulum membrane. It localises to the host Golgi apparatus membrane. The protein resides in the host cell membrane. In terms of biological role, class I viral fusion protein that directs fusion of viral and host endosomal membranes, leading to delivery of the nucleocapsid into the cytoplasm. Membrane fusion is mediated by irreversible conformational changes induced upon acidification in the endosome. Its function is as follows. Stable signal peptide (SSP): cleaved and functions as a signal peptide. In addition, it is also retained as the third component of the GP complex. The SSP is required for efficient glycoprotein expression, post-translational maturation cleavage of GP1 and GP2, glycoprotein transport to the cell surface plasma membrane, formation of infectious virus particles, and acid pH-dependent glycoprotein-mediated cell fusion. Interacts with the host receptor. This Tacaribe virus (strain V5) (TCRV) protein is Pre-glycoprotein polyprotein GP complex.